The primary structure comprises 119 residues: Protein TusC (119 aa).

This sequence belongs to the DsrF/TusC family. As to quaternary structure, heterohexamer, formed by a dimer of trimers. The hexameric TusBCD complex contains 2 copies each of TusB, TusC and TusD. The TusBCD complex interacts with TusE.

Its subcellular location is the cytoplasm. Part of a sulfur-relay system required for 2-thiolation of 5-methylaminomethyl-2-thiouridine (mnm(5)s(2)U) at tRNA wobble positions. This Shigella boydii serotype 18 (strain CDC 3083-94 / BS512) protein is Protein TusC.